Consider the following 89-residue polypeptide: Defensin-like protein 197 (89 aa).

The first 26 residues, 1-26 (MKFVSVFLVLFIFFLVVLEAPEKIEA), serve as a signal peptide directing secretion. 4 disulfides stabilise this stretch: Cys33/Cys86, Cys46/Cys70, Cys55/Cys81, and Cys59/Cys83.

Belongs to the DEFL family. Protease inhibitor I18 (RTI/MTI-2) subfamily.

The protein localises to the secreted. This is Defensin-like protein 197 (ATTI6) from Arabidopsis thaliana (Mouse-ear cress).